Reading from the N-terminus, the 93-residue chain is Large ribosomal subunit protein uL23cz/uL23cy (93 aa).

The protein belongs to the universal ribosomal protein uL23 family. As to quaternary structure, part of the 50S ribosomal subunit.

The protein resides in the plastid. The protein localises to the chloroplast. Binds to 23S rRNA. This Atropa belladonna (Belladonna) protein is Large ribosomal subunit protein uL23cz/uL23cy (rpl23-A).